Consider the following 947-residue polypeptide: Netrin receptor unc-5 (947 aa).

The 99-residue stretch at 43 to 141 (VIRNKPLRLQ…VHLAYMRKHF (99 aa)) folds into the Ig-like domain. Intrachain disulfides connect Cys-53-Cys-112, Cys-160-Cys-209, Cys-243-Cys-295, Cys-247-Cys-299, and Cys-273-Cys-285. The Ig-like C2-type domain maps to 139-226 (KHFLKSPVAQ…SRKTDPVEVQ (88 aa)). A glycan (N-linked (GlcNAc...) asparagine) is linked at Asn-206. TSP type-1 domains follow at residues 230–300 (DGGW…VPCK) and 302–354 (DGGW…QLCT). C-linked (Man) tryptophan glycans are attached at residues Trp-305 and Trp-308. The chain crosses the membrane as a helical span at residues 369–389 (GSVASIFIVASFILAILAMFC). Residues 390 to 947 (CKRGNSKKSK…LSAFPQIVSP (558 aa)) are Cytoplasmic-facing. Position 510 is a phosphotyrosine (Tyr-510). The region spanning 530 to 658 (NIVAAQIDSN…LNTNMFVQFE (129 aa)) is the ZU5 domain. A Death domain is found at 857–938 (ELARLLDMPN…DAVMVLERFL (82 aa)).

It belongs to the unc-5 family. Interacts (via cytoplasmic domain) with src-1 (via SH2 domain and SH3 domain). Interacts with madd-4. Interacts with unc-129; the interaction is direct. Phosphorylated on different cytoplasmic tyrosine residues. May be phosphorylated on tyrosine residues by src-1. Tyrosine phosphorylation is unc-6-dependent. Post-translationally, glycosylated via C-mannosylation by dpy-19 at Trp-305 and Trp-308. In terms of tissue distribution, expressed in cell bodies and axons of the VNC motor neurons that extend axons to the dorsal midline and within the ventral nerve cord. Expressed in gonadal distal tip cells (DTC).

The protein localises to the cell membrane. It is found in the membrane raft. Its subcellular location is the cell projection. It localises to the neuron projection. Receptor for netrin (unc-6) required for axon guidance. Mediates axon repulsion of neuronal growth cones in the developing nervous system upon ligand binding. Axon migration is mediated by the secreted unc-6, which promotes attraction of neurons and axons through binding to the unc-40 receptor, while repulsion requires both unc-5 and unc-40 receptors. Involved in the ventral-dorsal and anterior-posterior migration of distal tip cells along the body, which may be mediated by Wnt receptor mom-5, ced-10/Rac, ced-12/ELMO and mig-2/RhoG. The polypeptide is Netrin receptor unc-5 (Caenorhabditis elegans).